Consider the following 491-residue polypeptide: Cytochrome P450 2F1 (491 aa).

Residue C436 coordinates heme.

Belongs to the cytochrome P450 family. Requires heme as cofactor. As to expression, expressed in lung. Rarely detected in liver and placenta.

Its subcellular location is the endoplasmic reticulum membrane. It is found in the microsome membrane. It catalyses the reaction an organic molecule + reduced [NADPH--hemoprotein reductase] + O2 = an alcohol + oxidized [NADPH--hemoprotein reductase] + H2O + H(+). May be involved in the metabolism of various pneumotoxicants including naphthalene. Is able to dealkylate ethoxycoumarin, propoxycoumarin, and pentoxyresorufin but possesses no activity toward ethoxyresorufin and only trace dearylation activity toward benzyloxyresorufin. Bioactivates 3-methylindole (3MI) by dehydrogenation to the putative electrophile 3-methylene-indolenine. The polypeptide is Cytochrome P450 2F1 (CYP2F1) (Homo sapiens (Human)).